Reading from the N-terminus, the 861-residue chain is Leucine--tRNA ligase (861 aa).

The short motif at 42 to 52 (PYPSGNLHMGH) is the 'HIGH' region element. The 'KMSKS' region motif lies at 620 to 624 (KMSKS). Residue Lys623 coordinates ATP.

The protein belongs to the class-I aminoacyl-tRNA synthetase family.

The protein resides in the cytoplasm. It catalyses the reaction tRNA(Leu) + L-leucine + ATP = L-leucyl-tRNA(Leu) + AMP + diphosphate. In Baumannia cicadellinicola subsp. Homalodisca coagulata, this protein is Leucine--tRNA ligase.